The sequence spans 1154 residues: MLERSLLLATLLSALCSANLFGNNSYVYYYQSAFRPPDGWHLHGGAYEVVNVFTESSNAGTTGCTVGAIYWSKNFSAASVAMTAPQNGMSWSTEQFCTAHCNFTDFVVFVTHCYKSSHGSCPLTGLIPQNHIRISAMKNSSLFYNLTVAVTKYPRFKSLQCVNNMTSVYLNGDLVFTSNETKDVSAAGVHFKAGGPITYKVMREVKALAYFVNGTAQDVILCDGSPTGLLACQYNTGNFSDGFYPFTNSSLVKEKFIVYRESSVNTTLELTNFTFSNVSNATPNTGGVQTIQLYQTSTAQSGYYNLNFSFLSSFIYKASDYMYGSYHPSCKFRLETINNGLWFNSLSVSLGYGPIQGGCKQSVFANRATCCYAYSYNGPSLCKGVYRGELTKSFECGLLVFVTKTDGSRIQTRNEPFTLTQHNYNNITLDRCVEYNIYGRVGQGFITNVTNYAINYNYLADGGMAILDTSGAIDIFVVQGEYGLNYYKVNPCEDVNQQFVVSGGKLVGILTSRNETGSQPLENQFYIKIINGTRRSRRSITGNVTNCPYVTYGKFCIKPDGSISTIVPKELEHFVAPLLNVTENVLIPDSFNLTVTDEYIQTRMDKVQINCLQYVCGNSLECRKLFQQYGPVCDNILSVVNSVGQKEDMELLHFYSSTKPSGFNTPVLSNVSTGEFNISLLLTPPSSASGRSFIEDLLFTSVESVGLPTDDAYKKCTAGPLGFLKDLACAREYNGLLVLPPIITAEMQTLYTSSLVASMAFGGITSVGAIPFATQLQARINHLGITQSLLLKNQEKIAASFNKAIGHMQEGFRSTSLALQQIQDVVNKQSSILTETMASLNKNFGAISSVLQDIYQQLDSIQADAQVDRIITGRLSSLSVLASAKQAEYYRVSQQRELATQKINECVKSQSIRYSFCGNGRHVLTIPQNAPNGIVFIHFTYTPESFVNVTAIVGFCVNPANASQYAIVPANGRGIFIQVNGSYYITARDMYMPRDITAGDIVTLTSCQANYVSVNKTVITTFVDNDDFDFDDELSKWWNDTKHELPDFDEFNYTVPILDIGSEIDRIQGVIQGLNDSLIDLETLSILKTYIKWPWYVWLAIAFATIIFILILGWLFFMTGCCGCCCGCFGIIPLMSKCGKKSSYYTTFDNDVVT.

The N-terminal stretch at 1 to 18 (MLERSLLLATLLSALCSA) is a signal peptide. Over 19–1096 (NLFGNNSYVY…LKTYIKWPWY (1078 aa)) the chain is Extracellular. N-linked (GlcNAc...) asparagine; by host glycans are attached at residues Asn-23, Asn-74, Asn-102, Asn-139, Asn-145, Asn-164, Asn-179, Asn-213, Asn-238, Asn-248, Asn-265, Asn-272, Asn-277, Asn-307, Asn-426, Asn-448, Asn-514, Asn-531, Asn-543, Asn-580, Asn-592, Asn-670, and Asn-677. The heptad repeat 1 (HR1) stretch occupies residues 770 to 875 (IPFATQLQAR…QVDRIITGRL (106 aa)). Positions 823–867 (QDVVNKQSSILTETMASLNKNFGAISSVLQDIYQQLDSIQADAQV) form a coiled coil. 7 N-linked (GlcNAc...) asparagine; by host glycosylation sites follow: Asn-948, Asn-961, Asn-980, Asn-1015, Asn-1039, Asn-1052, and Asn-1075. The interval 1025 to 1106 (NDDFDFDDEL…VWLAIAFATI (82 aa)) is heptad repeat 2 (HR2). Positions 1056-1084 (PILDIGSEIDRIQGVIQGLNDSLIDLETL) form a coiled coil. Residues 1097-1117 (VWLAIAFATIIFILILGWLFF) traverse the membrane as a helical segment. Topologically, residues 1118-1154 (MTGCCGCCCGCFGIIPLMSKCGKKSSYYTTFDNDVVT) are cytoplasmic.

This sequence belongs to the gammacoronaviruses spike protein family. Homotrimer; each monomer consists of a S1 and a S2 subunit. The resulting peplomers protrude from the virus surface as spikes. Post-translationally, specific enzymatic cleavages in vivo yield mature proteins. The precursor is processed into S1 and S2 by host cell furin or furin-like protease to yield the mature S1 and S2 proteins. The cleavage site between S1 and S2 requires the optimal sequence [KR]-X-[KR]-R. Additionally, a second cleavage leads to the release of a fusion peptide after viral attachment to host cell receptor.

Its subcellular location is the virion membrane. The protein resides in the host endoplasmic reticulum-Golgi intermediate compartment membrane. In terms of biological role, attaches the virion to the host cell membrane by interacting with sialic acids, initiating the infection. Its function is as follows. Mediates fusion of the virion and cellular membranes by acting as a class I viral fusion protein. Under the current model, the protein has at least 3 conformational states: pre-fusion native state, pre-hairpin intermediate state, and post-fusion hairpin state. During viral and target cell membrane fusion, the coiled coil regions (heptad repeats) assume a trimer-of-hairpins structure, positioning the fusion peptide in close proximity to the C-terminal region of the ectodomain. The formation of this structure appears to drive apposition and subsequent fusion of viral and target cell membranes. Functionally, acts as a viral fusion peptide after S2 cleavage occurring upon virus endocytosis. This chain is Spike glycoprotein, found in Gallus gallus (Chicken).